Here is a 407-residue protein sequence, read N- to C-terminus: BRCA1-A complex subunit Abraxas 1 (407 aa).

The region spanning 7–155 (LGVLSGFVLG…THCLEHALYK (149 aa)) is the MPN domain. A Phosphoserine modification is found at serine 48. Positions 209–259 (LKEVHKINEMYAAVQEELKSICQKVEQSEREVEKLLMDVNQLKEVRRTQQA) form a coiled coil. Positions 344–407 (KRKALDTHDQ…DADYPRSPTF (64 aa)) are disordered. Basic and acidic residues predominate over residues 347–366 (ALDTHDQGSVKRPRLLETES). A phosphoserine mark is found at serine 384, serine 385, serine 394, and serine 404. Residues 388–399 (IDIEMGSPEDDA) show a composition bias toward acidic residues. A pSXXF motif motif is present at residues 404–407 (SPTF).

This sequence belongs to the FAM175 family. Abraxas subfamily. In terms of assembly, component of the ARISC complex, at least composed of UIMC1/RAP80, ABRAXAS1, BRCC3/BRCC36, BABAM2 and BABAM1/NBA1. Component of the BRCA1-A complex, at least composed of the BRCA1, BARD1, UIMC1/RAP80, ABRAXAS1, BRCC3/BRCC36, BABAM2 and BABAM1/NBA1. In the complex, interacts directly with UIMC1/RAP80, BRCC3/BRCC36 and BABAM2. Homodimer. Interacts directly (when phosphorylated at Ser-404) with BRCA1. The phosphorylated homodimer can interact directly with two BRCA1 chains, giving rise to a heterotetramer. Binds polyubiquitin. Phosphorylation of Ser-404 of the pSXXF motif by ATM or ATR constitutes a specific recognition motif for the BRCT domain of BRCA1.

It is found in the nucleus. In terms of biological role, involved in DNA damage response and double-strand break (DSB) repair. Component of the BRCA1-A complex, acting as a central scaffold protein that assembles the various components of the complex and mediates the recruitment of BRCA1. The BRCA1-A complex specifically recognizes 'Lys-63'-linked ubiquitinated histones H2A and H2AX at DNA lesion sites, leading to target the BRCA1-BARD1 heterodimer to sites of DNA damage at DSBs. This complex also possesses deubiquitinase activity that specifically removes 'Lys-63'-linked ubiquitin on histones H2A and H2AX. This chain is BRCA1-A complex subunit Abraxas 1, found in Mus musculus (Mouse).